The primary structure comprises 469 residues: 3-isopropylmalate dehydratase large subunit (469 aa).

Residues Cys-349, Cys-410, and Cys-413 each contribute to the [4Fe-4S] cluster site.

This sequence belongs to the aconitase/IPM isomerase family. LeuC type 1 subfamily. As to quaternary structure, heterodimer of LeuC and LeuD. Requires [4Fe-4S] cluster as cofactor.

It carries out the reaction (2R,3S)-3-isopropylmalate = (2S)-2-isopropylmalate. The protein operates within amino-acid biosynthesis; L-leucine biosynthesis; L-leucine from 3-methyl-2-oxobutanoate: step 2/4. Functionally, catalyzes the isomerization between 2-isopropylmalate and 3-isopropylmalate, via the formation of 2-isopropylmaleate. This Neisseria meningitidis serogroup C (strain 053442) protein is 3-isopropylmalate dehydratase large subunit.